The sequence spans 228 residues: Small ribosomal subunit protein uS7A (228 aa).

The protein belongs to the universal ribosomal protein uS7 family.

This chain is Small ribosomal subunit protein uS7A (RpS5a), found in Drosophila melanogaster (Fruit fly).